The chain runs to 325 residues: Elongation factor P--(R)-beta-lysine ligase (325 aa).

76 to 78 (SPE) provides a ligand contact to substrate. Residues 100-102 (RNE) and Asn109 contribute to the ATP site. Position 118 (Tyr118) interacts with substrate. Residue 244–245 (EL) participates in ATP binding. Glu251 lines the substrate pocket. ATP is bound at residue Gly300.

The protein belongs to the class-II aminoacyl-tRNA synthetase family. EpmA subfamily. Homodimer.

It catalyses the reaction D-beta-lysine + L-lysyl-[protein] + ATP = N(6)-((3R)-3,6-diaminohexanoyl)-L-lysyl-[protein] + AMP + diphosphate + H(+). With EpmB is involved in the beta-lysylation step of the post-translational modification of translation elongation factor P (EF-P) on 'Lys-34'. Catalyzes the ATP-dependent activation of (R)-beta-lysine produced by EpmB, forming a lysyl-adenylate, from which the beta-lysyl moiety is then transferred to the epsilon-amino group of EF-P 'Lys-34'. The polypeptide is Elongation factor P--(R)-beta-lysine ligase (Salmonella dublin (strain CT_02021853)).